The chain runs to 679 residues: Pescadillo homolog (679 aa).

In terms of domain architecture, BRCT spans 351 to 471 (EVASLFAPFT…KLLRADHYSP (121 aa)). Disordered regions lie at residues 413–437 (ALSN…PKAQ) and 480–679 (SPWV…AEAV). A compositionally biased stretch (polar residues) spans 418–427 (APASNVQETE). Acidic residues-rich tracts occupy residues 503–528 (GEAE…DMEA) and 543–580 (DVAD…DISE). Residues 573 to 679 (DAESDISEGE…EKAKAAAEAV (107 aa)) are a coiled coil. Basic and acidic residues-rich tracts occupy residues 582–614 (EAAR…ENAT), 623–634 (KRAEEEERERQK), 646–662 (KRIE…SENL), and 669–679 (VEKAKAAAEAV).

The protein belongs to the pescadillo family. Component of the NOP7 complex, composed of erb1, nop7 and ytm1. The complex is held together by erb1, which interacts with nop7 via its N-terminal domain and with ytm1 via a high-affinity interaction between the seven-bladed beta-propeller domains of the 2 proteins. The NOP7 complex associates with the 66S pre-ribosome.

Its subcellular location is the nucleus. It is found in the nucleolus. It localises to the nucleoplasm. Component of the NOP7 complex, which is required for maturation of the 25S and 5.8S ribosomal RNAs and formation of the 60S ribosome. The polypeptide is Pescadillo homolog (nop7) (Pyrenophora tritici-repentis (strain Pt-1C-BFP) (Wheat tan spot fungus)).